A 626-amino-acid polypeptide reads, in one-letter code: Elongation factor 4 (626 aa).

The tr-type G domain maps to 14 to 195 (SVIRNFCIIA…QIVMDVPAPH (182 aa)). GTP contacts are provided by residues 26-31 (DHGKST) and 142-145 (NKID). Residues 603 to 626 (LSTGEDSNDRDTKDKIRAAQKTEG) form a disordered region. Over residues 609-626 (SNDRDTKDKIRAAQKTEG) the composition is skewed to basic and acidic residues.

It belongs to the TRAFAC class translation factor GTPase superfamily. Classic translation factor GTPase family. LepA subfamily.

It is found in the cell membrane. The catalysed reaction is GTP + H2O = GDP + phosphate + H(+). Its function is as follows. Required for accurate and efficient protein synthesis under certain stress conditions. May act as a fidelity factor of the translation reaction, by catalyzing a one-codon backward translocation of tRNAs on improperly translocated ribosomes. Back-translocation proceeds from a post-translocation (POST) complex to a pre-translocation (PRE) complex, thus giving elongation factor G a second chance to translocate the tRNAs correctly. Binds to ribosomes in a GTP-dependent manner. The polypeptide is Elongation factor 4 (Bifidobacterium longum (strain DJO10A)).